The chain runs to 603 residues: Elongation factor 4 (603 aa).

Residues 7 to 189 (SRLRNFCIIA…AVVDRIPSPK (183 aa)) enclose the tr-type G domain. GTP-binding positions include 19–24 (DHGKST) and 136–139 (NKVD).

Belongs to the TRAFAC class translation factor GTPase superfamily. Classic translation factor GTPase family. LepA subfamily.

The protein resides in the cell inner membrane. The enzyme catalyses GTP + H2O = GDP + phosphate + H(+). Its function is as follows. Required for accurate and efficient protein synthesis under certain stress conditions. May act as a fidelity factor of the translation reaction, by catalyzing a one-codon backward translocation of tRNAs on improperly translocated ribosomes. Back-translocation proceeds from a post-translocation (POST) complex to a pre-translocation (PRE) complex, thus giving elongation factor G a second chance to translocate the tRNAs correctly. Binds to ribosomes in a GTP-dependent manner. The sequence is that of Elongation factor 4 from Prochlorococcus marinus (strain NATL2A).